Reading from the N-terminus, the 293-residue chain is Delta(3,5)-Delta(2,4)-dienoyl-CoA isomerase, mitochondrial (293 aa).

Substrate is bound by residues 84 to 88 (AGLNL) and Gly142.

It belongs to the enoyl-CoA hydratase/isomerase family.

The protein localises to the mitochondrion. The enzyme catalyses (3E,5Z)-octadienoyl-CoA = (2E,4E)-octadienoyl-CoA. The catalysed reaction is (3E,5Z,8Z,11Z,14Z)-eicosapentaenoyl-CoA = (2E,4E,8Z,11Z,14Z)-eicosapentaenoyl-CoA. The protein operates within lipid metabolism; fatty acid beta-oxidation. Functionally, isomerization of 3-trans,5-cis-dienoyl-CoA to 2-trans,4-trans-dienoyl-CoA. The sequence is that of Delta(3,5)-Delta(2,4)-dienoyl-CoA isomerase, mitochondrial (ech1) from Dictyostelium discoideum (Social amoeba).